The sequence spans 291 residues: Mitochondrial citrate transporter B (291 aa).

3 Solcar repeats span residues 10–97 (PQKW…IKNS), 105–193 (LSPA…LKES), and 201–283 (PTLF…MTYL). The next 6 helical transmembrane spans lie at 16 to 36 (LIAGGVAGGVEAASTYPFEYA), 74 to 94 (STLIIGTTAKAAVRFVSYDTI), 112 to 132 (VAGVVAGATESVLAVTPTERI), 172 to 192 (TTLKQSATSAVRMGTYNILKE), 203 to 220 (LFTTFCMGALAGVVTVYA), and 255 to 276 (FWKGSSMRLGRLLLSGGIVFSV).

Belongs to the mitochondrial carrier (TC 2.A.29) family.

It localises to the mitochondrion inner membrane. The catalysed reaction is citrate(in) + H(+)(in) = citrate(out) + H(+)(out). In terms of biological role, mitochondrial transporter that mediates citrate export from mitochondria to cytoplasm. Both ctpA, ctpB, and ctpD play important roles in citric acid transport across the mitochondrial membrane and function in a redundant manner. The chain is Mitochondrial citrate transporter B from Aspergillus niger (strain ATCC 1015 / CBS 113.46 / FGSC A1144 / LSHB Ac4 / NCTC 3858a / NRRL 328 / USDA 3528.7).